A 353-amino-acid chain; its full sequence is Inactive ubiquitin thioesterase OTULINL (353 aa).

Positions 1–80 (MKATRSAPRE…KWWIGYLQRK (80 aa)) are required for membrane binding. Residues 125-353 (KCVRPVKRDN…NDHQYHIPVF (229 aa)) form the OTU domain.

Belongs to the peptidase C65 family. Otulin subfamily. Does not bind ubiquitin or ubiquitin-like proteins.

The protein resides in the cytoplasm. Its subcellular location is the endoplasmic reticulum membrane. The protein localises to the nucleus envelope. Lacks deubiquitinase activity. The chain is Inactive ubiquitin thioesterase OTULINL from Rattus norvegicus (Rat).